Reading from the N-terminus, the 429-residue chain is Nicotinate phosphoribosyltransferase (429 aa).

3 residues coordinate nicotinate: Tyr-15, Phe-177, and Thr-229. His-232 is subject to Phosphohistidine; by autocatalysis. Residue Arg-294 coordinates nicotinate. Thr-355 provides a ligand contact to 5-phospho-alpha-D-ribose 1-diphosphate.

This sequence belongs to the NAPRTase family. Post-translationally, transiently phosphorylated on a His residue during the reaction cycle. Phosphorylation strongly increases the affinity for substrates and increases the rate of nicotinate D-ribonucleotide production. Dephosphorylation regenerates the low-affinity form of the enzyme, leading to product release.

It is found in the cytoplasm. The protein localises to the nucleus. It carries out the reaction nicotinate + 5-phospho-alpha-D-ribose 1-diphosphate + ATP + H2O = nicotinate beta-D-ribonucleotide + ADP + phosphate + diphosphate. It participates in cofactor biosynthesis; NAD(+) biosynthesis; nicotinate D-ribonucleotide from nicotinate: step 1/1. In terms of biological role, catalyzes the first step in the biosynthesis of NAD from nicotinic acid, the ATP-dependent synthesis of beta-nicotinate D-ribonucleotide from nicotinate and 5-phospho-D-ribose 1-phosphate. Essential for growth under anaerobic conditions. This chain is Nicotinate phosphoribosyltransferase (NPT1), found in Saccharomyces cerevisiae (strain ATCC 204508 / S288c) (Baker's yeast).